The following is a 295-amino-acid chain: Dehydrodolichyl diphosphate synthase 6 (295 aa).

Belongs to the UPP synthase family. Requires Mg(2+) as cofactor.

Its pathway is protein modification; protein glycosylation. In terms of biological role, catalyzes cis-prenyl chain elongation to produce the polyprenyl backbone of dolichol, a glycosyl carrier-lipid required for the biosynthesis of several classes of glycoprotein. The sequence is that of Dehydrodolichyl diphosphate synthase 6 from Arabidopsis thaliana (Mouse-ear cress).